The chain runs to 511 residues: Endoglucanase B (511 aa).

Residues 1 to 29 form the signal peptide; sequence MNLLSGWVRPLMLGCGLLGAALSAGSIQA. Residues 30-130 form the CBM2 domain; sequence AVCEYRVTNE…AVTGAICGGQ (101 aa). A disulfide bridge links C32 with C127. The segment at 137-173 is disordered; sequence SVASSSSSSSVVSSTPRSSSSSVSSSVPGTSSSSSSS. Positions 180-209 constitute a CBM10 domain; the sequence is ACNWYGTLTPLCNNTSNGWGYEDGRSCVAR. 2 cysteine pairs are disulfide-bonded: C181-C212 and C191-C206. D276 (nucleophile) is an active-site residue. The Proton donor role is filled by D393.

The protein belongs to the glycosyl hydrolase 45 (cellulase K) family.

The protein resides in the periplasm. The enzyme catalyses Endohydrolysis of (1-&gt;4)-beta-D-glucosidic linkages in cellulose, lichenin and cereal beta-D-glucans.. This enzyme catalyzes the endohydrolysis of 1,4-beta-glucosidic linkages in cellulose, lichenin and cereal beta-D-glucans. EGB is most active against barley beta-glucan, but showed significant activity against amorphous and crystalline cellulose. The sequence is that of Endoglucanase B (celB) from Cellvibrio japonicus (strain Ueda107) (Pseudomonas fluorescens subsp. cellulosa).